Reading from the N-terminus, the 764-residue chain is Dehydrocurvularin biosynthesis regulator (764 aa).

The zn(2)-C6 fungal-type DNA-binding region spans 28–59 (CWECKRRKMKCIFDPRITSTSCNGCRQRGSPC). Disordered stretches follow at residues 73–94 (HGAN…SDDA), 112–136 (YRYL…ASTC), and 633–672 (FPTS…PALS). A compositionally biased stretch (polar residues) spans 77-88 (DSASLDASTPIA). Over residues 663-672 (HPNTPSPALS) the composition is skewed to polar residues.

Its subcellular location is the nucleus. Functionally, transcription factor involved in regulation of the dehydrocurvularin biosynthesis gene cluster. The polypeptide is Dehydrocurvularin biosynthesis regulator (Alternaria cinerariae).